The chain runs to 314 residues: Homoserine kinase (314 aa).

96–106 (PIGSGLGSSAC) provides a ligand contact to ATP.

It belongs to the GHMP kinase family. Homoserine kinase subfamily.

The protein resides in the cytoplasm. It catalyses the reaction L-homoserine + ATP = O-phospho-L-homoserine + ADP + H(+). Its pathway is amino-acid biosynthesis; L-threonine biosynthesis; L-threonine from L-aspartate: step 4/5. Its function is as follows. Catalyzes the ATP-dependent phosphorylation of L-homoserine to L-homoserine phosphate. The protein is Homoserine kinase of Haemophilus influenzae (strain PittEE).